Here is a 275-residue protein sequence, read N- to C-terminus: Phosphate import ATP-binding protein PstB (275 aa).

One can recognise an ABC transporter domain in the interval 28–270 (MSAKNVSVFY…PREERTKDYI (243 aa)). 60–67 (GPSGCGKS) provides a ligand contact to ATP.

This sequence belongs to the ABC transporter superfamily. Phosphate importer (TC 3.A.1.7) family. The complex is composed of two ATP-binding proteins (PstB), two transmembrane proteins (PstC and PstA) and a solute-binding protein (PstS).

Its subcellular location is the cell inner membrane. The enzyme catalyses phosphate(out) + ATP + H2O = ADP + 2 phosphate(in) + H(+). Functionally, part of the ABC transporter complex PstSACB involved in phosphate import. Responsible for energy coupling to the transport system. This Novosphingobium aromaticivorans (strain ATCC 700278 / DSM 12444 / CCUG 56034 / CIP 105152 / NBRC 16084 / F199) protein is Phosphate import ATP-binding protein PstB.